The chain runs to 147 residues: Truncated RecQ DNA helicase-like protein C212.06c (147 aa).

The 72-residue stretch at 1 to 72 folds into the Helicase C-terminal domain; sequence MGVRLVVHYR…CVRSFLASEM (72 aa). Residues 100–147 are disordered; the sequence is ETPKPAIATHSRYNASFSSSPPPQPGSSSGMSAMNTNTTSTTPVSGKT. Positions 125–141 are enriched in low complexity; the sequence is GSSSGMSAMNTNTTSTT.

It belongs to the helicase family. RecQ subfamily.

Truncated ATP-dependent 3'-5' DNA helicase. The chain is Truncated RecQ DNA helicase-like protein C212.06c from Schizosaccharomyces pombe (strain 972 / ATCC 24843) (Fission yeast).